The primary structure comprises 526 residues: Protein spinster homolog 1 (526 aa).

Residues 1 to 43 (MTSRSSQGDAAPFLTQADNTEEEGAPDPGGHSSDEEEEEGKDH) are disordered. Transmembrane regions (helical) follow at residues 48 to 68 (HLLT…LFYI), 98 to 118 (GLVQ…FGYL), 126 to 146 (LIMC…SFVS), 159 to 179 (LVGV…ADLF), 187 to 207 (MLSF…IAGS), 218 to 238 (WALR…IFVA), 272 to 292 (FILS…LALW), 321 to 341 (MIFG…GVEI), 355 to 375 (LVCA…LAFA), 385 to 405 (FIFI…DILL), 419 to 439 (LQIV…IGVI), and 463 to 483 (MICA…ALFI).

It belongs to the major facilitator superfamily. Spinster (TC 2.A.1.49) family.

It localises to the lysosome membrane. The catalysed reaction is a 1-acyl-sn-glycero-3-phosphocholine(out) + H(+)(out) = a 1-acyl-sn-glycero-3-phosphocholine(in) + H(+)(in). It catalyses the reaction a 1-acyl-sn-glycero-3-phosphoethanolamine(out) + H(+)(out) = a 1-acyl-sn-glycero-3-phosphoethanolamine(in) + H(+)(in). It carries out the reaction a 1-O-(1Z-alkenyl)-sn-glycero-3-phosphocholine(out) + H(+)(out) = a 1-O-(1Z-alkenyl)-sn-glycero-3-phosphocholine(in) + H(+)(in). The enzyme catalyses a 1-O-(1Z-alkenyl)-sn-glycero-3-phosphoethanolamine(out) + H(+)(out) = a 1-O-(1Z-alkenyl)-sn-glycero-3-phosphoethanolamine(in) + H(+)(in). Functionally, mediates the rate-limiting, proton-dependent, lysosomal efflux of lysophospholipids. Selective for zwitterionic headgroups such as lysophosphatidylcholine (LPC) and lysophosphatidylethanolamine (LPE). Essential player in lysosomal homeostasis. This chain is Protein spinster homolog 1 (spns1), found in Xenopus tropicalis (Western clawed frog).